The sequence spans 382 residues: Lactosylceramide 1,3-N-acetyl-beta-D-glucosaminyltransferase B (382 aa).

The Cytoplasmic segment spans residues methionine 1–histidine 13. The chain crosses the membrane as a helical; Signal-anchor for type II membrane protein span at residues leucine 14 to tryptophan 30. The Lumenal segment spans residues glutamate 31–threonine 382. N-linked (GlcNAc...) asparagine glycans are attached at residues asparagine 57, asparagine 112, asparagine 167, and asparagine 276.

This sequence belongs to the glycosyltransferase 31 family.

It is found in the golgi apparatus membrane. The catalysed reaction is a beta-D-Gal-(1-&gt;4)-beta-D-Glc-(1&lt;-&gt;1)-Cer(d18:1(4E)) + UDP-N-acetyl-alpha-D-glucosamine = a beta-D-GlcNAc-(1-&gt;3)-beta-D-Gal-(1-&gt;4)-beta-D-Glc-(1&lt;-&gt;1)-Cer(d18:1(4E)) + UDP + H(+). It catalyses the reaction a neolactoside nLc4Cer(d18:1(4E)) + UDP-N-acetyl-alpha-D-glucosamine = a neolactoside IV(3)-beta-GlcNAc-nLc4Cer(d18:1(4E)) + UDP + H(+). It participates in protein modification; protein glycosylation. Beta-1,3-N-acetylglucosaminyltransferase that plays a key role in the synthesis of lacto- or neolacto-series carbohydrate chains on glycolipids. The protein is Lactosylceramide 1,3-N-acetyl-beta-D-glucosaminyltransferase B (b3gnt5b) of Danio rerio (Zebrafish).